A 124-amino-acid chain; its full sequence is Glycine cleavage system H protein (124 aa).

The region spanning 22–104 (VATVGITEFA…YGAGWLFRVE (83 aa)) is the Lipoyl-binding domain. At lysine 63 the chain carries N6-lipoyllysine.

This sequence belongs to the GcvH family. As to quaternary structure, the glycine cleavage system is composed of four proteins: P, T, L and H. The cofactor is (R)-lipoate.

The glycine cleavage system catalyzes the degradation of glycine. The H protein shuttles the methylamine group of glycine from the P protein to the T protein. The protein is Glycine cleavage system H protein of Beutenbergia cavernae (strain ATCC BAA-8 / DSM 12333 / CCUG 43141 / JCM 11478 / NBRC 16432 / NCIMB 13614 / HKI 0122).